The sequence spans 159 residues: Transcriptional repressor NrdR (159 aa).

A disordered region spans residues 1–21; the sequence is MRCPKCQHNKSNVIDSRQAED. Residues 3-34 fold into a zinc finger; it reads CPKCQHNKSNVIDSRQAEDGNTIRRRRECDAC. Residues 49 to 139 form the ATP-cone domain; it reads LLVVKKDGTR…VYRSFKDVDE (91 aa).

The protein belongs to the NrdR family. The cofactor is Zn(2+).

Its function is as follows. Negatively regulates transcription of bacterial ribonucleotide reductase nrd genes and operons by binding to NrdR-boxes. This is Transcriptional repressor NrdR from Streptococcus thermophilus (strain CNRZ 1066).